Consider the following 493-residue polypeptide: Transmembrane protein 145 (493 aa).

A helical membrane pass occupies residues 9 to 29; it reads LRRLLPPLLLLLLSLPPRARA. Asn-35 carries an N-linked (GlcNAc...) asparagine glycan. The next 7 membrane-spanning stretches (helical) occupy residues 175 to 195, 207 to 227, 241 to 261, 282 to 302, 318 to 338, 349 to 369, and 381 to 401; these read VTFLLIFILIFFLSCYFGYLL, MFMAAAGVEVLSLLFFCIYWG, ILAKLLFSSSFLIFLLMLILL, VYMTLYTLTHVVLLIYEAEFF, GLIGLQVAAYVWFCYAVLVSL, VPFFAAYTLWFFAVPVMALIA, and IVNGIQLGIHLYAHGVFLIMT. The N-linked (GlcNAc...) asparagine glycan is linked to Asn-444. The segment at 464–493 is disordered; the sequence is PATSPLPRAAPDSGLPLFRDLRPPGPLRDL.

It is found in the membrane. The chain is Transmembrane protein 145 (TMEM145) from Homo sapiens (Human).